Consider the following 422-residue polypeptide: F-box/FBD/LRR-repeat protein At5g56420 (422 aa).

Positions 5 to 54 (RDRLSQLPDDFLLQILSWLPTKDVLVTSLLSKRWRFLWTLVPRLNYDLRL) constitute an F-box domain. LRR repeat units lie at residues 59–85 (CPRF…NIKI), 136–163 (VLKL…HLLD), 164–189 (VKYL…VVQR), 193–212 (DNVK…SLHK), 214–238 (SQAF…DIED), 279–304 (LCLI…ELCT), and 305–330 (CAPR…KLRQ). Positions 342 to 391 (SWKQPALPKCLLFHLETFKWELYEGSQKQKEVATFILKHAIRLKTAIISP) constitute an FBD domain.

This is F-box/FBD/LRR-repeat protein At5g56420 from Arabidopsis thaliana (Mouse-ear cress).